The following is a 495-amino-acid chain: Ectonucleoside triphosphate diphosphohydrolase 2 (495 aa).

Residues Met-1–Lys-4 are Cytoplasmic-facing. A helical membrane pass occupies residues Leu-5–Leu-25. Residues Cys-26–Ser-462 lie on the Extracellular side of the membrane. A glycan (N-linked (GlcNAc...) asparagine) is linked at Asn-64. An intrachain disulfide couples Cys-75 to Cys-99. A glycan (N-linked (GlcNAc...) asparagine) is linked at Asn-129. Glu-165 functions as the Proton acceptor in the catalytic mechanism. Gly-204 to Gln-208 lines the ATP pocket. Disulfide bonds link Cys-242–Cys-284 and Cys-265–Cys-310. N-linked (GlcNAc...) asparagine glycans are attached at residues Asn-294, Asn-306, and Asn-319. 2 cysteine pairs are disulfide-bonded: Cys-323-Cys-328 and Cys-377-Cys-399. 2 N-linked (GlcNAc...) asparagine glycosylation sites follow: Asn-378 and Asn-443. The chain crosses the membrane as a helical span at residues Ser-463–Leu-483. At Arg-484–Leu-495 the chain is on the cytoplasmic side.

The protein belongs to the GDA1/CD39 NTPase family. Ca(2+) is required as a cofactor. It depends on Mg(2+) as a cofactor. In terms of tissue distribution, expressed in brain, heart, vas deferens, kidney, skeletal muscle, thymus, lung and spleen. Weak expression in liver.

It localises to the cell membrane. In terms of biological role, in the nervous system, could hydrolyze ATP and other nucleotides to regulate purinergic neurotransmission. Hydrolyzes ADP only to a marginal extent. This chain is Ectonucleoside triphosphate diphosphohydrolase 2 (Entpd2), found in Rattus norvegicus (Rat).